The primary structure comprises 260 residues: DNA import protein CedA (260 aa).

The next 6 membrane-spanning stretches (helical) occupy residues 13-33, 47-67, 110-130, 140-160, 169-189, and 220-240; these read LLAS…VPVY, IYVV…GELL, ALIQ…ALTF, IVYQ…SIPF, AFIG…QFLA, and IITS…GFSM.

Forms a complex composed of CedA, CedA1 and CedA2.

It is found in the cell membrane. Part of the Ced system, which is involved in DNA import. The sequence is that of DNA import protein CedA from Sulfolobus acidocaldarius (strain ATCC 33909 / DSM 639 / JCM 8929 / NBRC 15157 / NCIMB 11770).